A 169-amino-acid polypeptide reads, in one-letter code: MPRSGGINGNFIDKTFSIVANILLRIIPTTSGEKEAFTYYRDGMSAQSEGNYAEALQNYYEAMRLEIDPYDRSYILYNIGLIHTRNGEHTKALEYYFRALERNPFLPQAFNNMAVICHYRGEQAIRQGDSEIAEAWFNQAAEYWKQAIALTPGNYIEAQNWLKITRRFK.

3 TPR repeats span residues 36–69, 73–106, and 121–154; these read AFTY…EIDP, SYIL…NPFL, and GEQA…TPGN.

Belongs to the Ycf3 family.

Its subcellular location is the plastid. It localises to the chloroplast thylakoid membrane. Functionally, essential for the assembly of the photosystem I (PSI) complex. May act as a chaperone-like factor to guide the assembly of the PSI subunits. The sequence is that of Photosystem I assembly protein Ycf3 from Cucumis sativus (Cucumber).